Reading from the N-terminus, the 168-residue chain is Xanthine-guanine phosphoribosyltransferase (168 aa).

5-phospho-alpha-D-ribose 1-diphosphate contacts are provided by residues 43 to 44 (RG) and 102 to 110 (DDLVDTGAT). Asp-103 lines the Mg(2+) pocket. Asp-106 and Ile-149 together coordinate guanine. Xanthine is bound by residues Asp-106 and Ile-149. GMP contacts are provided by residues 106-110 (DTGAT) and 148-149 (WI).

This sequence belongs to the purine/pyrimidine phosphoribosyltransferase family. XGPT subfamily. In terms of assembly, homotetramer. It depends on Mg(2+) as a cofactor.

The protein localises to the cell inner membrane. The catalysed reaction is GMP + diphosphate = guanine + 5-phospho-alpha-D-ribose 1-diphosphate. The enzyme catalyses XMP + diphosphate = xanthine + 5-phospho-alpha-D-ribose 1-diphosphate. It catalyses the reaction IMP + diphosphate = hypoxanthine + 5-phospho-alpha-D-ribose 1-diphosphate. The protein operates within purine metabolism; GMP biosynthesis via salvage pathway; GMP from guanine: step 1/1. It participates in purine metabolism; XMP biosynthesis via salvage pathway; XMP from xanthine: step 1/1. In terms of biological role, purine salvage pathway enzyme that catalyzes the transfer of the ribosyl-5-phosphate group from 5-phospho-alpha-D-ribose 1-diphosphate (PRPP) to the N9 position of the 6-oxopurines guanine and xanthine to form the corresponding ribonucleotides GMP (guanosine 5'-monophosphate) and XMP (xanthosine 5'-monophosphate), with the release of PPi. To a lesser extent, also acts on hypoxanthine. The sequence is that of Xanthine-guanine phosphoribosyltransferase from Nitrobacter winogradskyi (strain ATCC 25391 / DSM 10237 / CIP 104748 / NCIMB 11846 / Nb-255).